The sequence spans 37 residues: Cytochrome b6-f complex subunit 5 (37 aa).

A helical transmembrane segment spans residues 5-25 (LLSGIVLGLIPITLAGLFVTA).

It belongs to the PetG family. In terms of assembly, the 4 large subunits of the cytochrome b6-f complex are cytochrome b6, subunit IV (17 kDa polypeptide, PetD), cytochrome f and the Rieske protein, while the 4 small subunits are PetG, PetL, PetM and PetN. The complex functions as a dimer.

It is found in the plastid. It localises to the chloroplast thylakoid membrane. In terms of biological role, component of the cytochrome b6-f complex, which mediates electron transfer between photosystem II (PSII) and photosystem I (PSI), cyclic electron flow around PSI, and state transitions. PetG is required for either the stability or assembly of the cytochrome b6-f complex. In Chara vulgaris (Common stonewort), this protein is Cytochrome b6-f complex subunit 5.